Reading from the N-terminus, the 98-residue chain is Co-chaperonin GroES 1 (98 aa).

Belongs to the GroES chaperonin family. As to quaternary structure, heptamer of 7 subunits arranged in a ring. Interacts with the chaperonin GroEL.

Its subcellular location is the cytoplasm. Together with the chaperonin GroEL, plays an essential role in assisting protein folding. The GroEL-GroES system forms a nano-cage that allows encapsulation of the non-native substrate proteins and provides a physical environment optimized to promote and accelerate protein folding. GroES binds to the apical surface of the GroEL ring, thereby capping the opening of the GroEL channel. The sequence is that of Co-chaperonin GroES 1 from Rhizobium meliloti (strain 1021) (Ensifer meliloti).